The following is a 203-amino-acid chain: ATP-dependent Clp protease proteolytic subunit (203 aa).

Ser-107 serves as the catalytic Nucleophile. His-132 is an active-site residue.

This sequence belongs to the peptidase S14 family. Fourteen ClpP subunits assemble into 2 heptameric rings which stack back to back to give a disk-like structure with a central cavity, resembling the structure of eukaryotic proteasomes.

The protein localises to the cytoplasm. It catalyses the reaction Hydrolysis of proteins to small peptides in the presence of ATP and magnesium. alpha-casein is the usual test substrate. In the absence of ATP, only oligopeptides shorter than five residues are hydrolyzed (such as succinyl-Leu-Tyr-|-NHMec, and Leu-Tyr-Leu-|-Tyr-Trp, in which cleavage of the -Tyr-|-Leu- and -Tyr-|-Trp bonds also occurs).. Its function is as follows. Cleaves peptides in various proteins in a process that requires ATP hydrolysis. Has a chymotrypsin-like activity. Plays a major role in the degradation of misfolded proteins. The protein is ATP-dependent Clp protease proteolytic subunit of Pelagibacter ubique (strain HTCC1062).